We begin with the raw amino-acid sequence, 1476 residues long: ABC-type transporter FG02316 (1476 aa).

Asn2 carries an N-linked (GlcNAc...) asparagine glycan. Transmembrane regions (helical) follow at residues 23-43 (FTLL…LLLA), 64-84 (WLYC…AFLV), 97-117 (SLPA…LSYV), 156-176 (AAIT…AETI), 266-286 (ILFI…QPFL), 305-325 (QGYG…VTTG), 384-404 (VWAN…QLGL), 407-427 (LIPV…VSFV), 485-505 (LLIW…VLSF), and 532-552 (LFAL…SFMG). One can recognise an ABC transmembrane type-1 1 domain in the interval 274–552 (LCFIGFTFCQ…FVTSLSSFMG (279 aa)). A disordered region spans residues 586–615 (ISGVSSSEEKHPVSPIQESMMKTEPSGDSP). The ABC transporter 1 domain occupies 622 to 847 (IRNASFGYDR…SDNYVSHSDV (226 aa)). An N-linked (GlcNAc...) asparagine glycan is attached at Asn624. 654-661 (GPVGSGKS) contributes to the ATP binding site. N-linked (GlcNAc...) asparagine glycosylation is found at Asn682, Asn696, Asn798, and Asn836. Residues 842–870 (VSHSDVSSPDGARSKAPSSGPASSSAPVP) form a disordered region. A compositionally biased stretch (low complexity) spans 855–870 (SKAPSSGPASSSAPVP). The next 6 helical transmembrane spans lie at 906 to 926 (MNAI…AYIF), 950 to 970 (LGYY…FLVL), 1021 to 1041 (LIDM…VLCI), 1045 to 1065 (ILIA…LATL), 1137 to 1157 (WLTL…VVLV), and 1167 to 1187 (GLIG…KLLM). The 280-residue stretch at 916 to 1195 (VFVLAICAYI…LMTFWTTLET (280 aa)) folds into the ABC transmembrane type-1 2 domain. Residues 1232 to 1464 (ILFDQVSAGY…GPDASTFASM (233 aa)) enclose the ABC transporter 2 domain. An N-linked (GlcNAc...) asparagine glycan is attached at Asn1250. 1265 to 1272 (GRTGSGKS) contacts ATP. An N-linked (GlcNAc...) asparagine glycan is attached at Asn1414.

The protein belongs to the ABC transporter superfamily. ABCC family. Conjugate transporter (TC 3.A.1.208) subfamily.

The protein localises to the cell membrane. Functionally, ABC-type transporter; part of the gene cluster that mediates the biosynthesis of the fusahexin, a cyclic hydrophobic hexapeptide with the amino acid sequence cyclo-(D-Ala-L-Leu-D-allo-Thr-L-Pro-D-Leu-L-Leu) that plays an important role in cell surface hydrophobicity. This is ABC-type transporter FG02316 from Gibberella zeae (strain ATCC MYA-4620 / CBS 123657 / FGSC 9075 / NRRL 31084 / PH-1) (Wheat head blight fungus).